The following is a 346-amino-acid chain: Short-wave-sensitive opsin 1 (346 aa).

At Met1 to Ala31 the chain is on the extracellular side. N-linked (GlcNAc...) asparagine glycosylation is present at Asn12. A helical membrane pass occupies residues Phe32–Ala56. The Cytoplasmic segment spans residues Thr57–Asn68. Residues Tyr69–Cys94 traverse the membrane as a helical segment. Topologically, residues His95–Glu108 are extracellular. A disulfide bridge connects residues Cys105 and Cys182. The helical transmembrane segment at Ala109–Phe128 threads the bilayer. Residues Glu129–His147 are Cytoplasmic-facing. The chain crosses the membrane as a helical span at residues Ala148–Ser171. At Arg172–Tyr197 the chain is on the extracellular side. A helical membrane pass occupies residues Tyr198 to Leu225. Over Arg226 to His247 the chain is Cytoplasmic. The chain crosses the membrane as a helical span at residues Met248–Val271. Topologically, residues Asn272–Asp279 are extracellular. A helical transmembrane segment spans residues Leu280–Met304. Position 291 is an N6-(retinylidene)lysine (Lys291). Residues Asn305–His346 lie on the Cytoplasmic side of the membrane. A disordered region spans residues Glu324–His346. A compositionally biased stretch (low complexity) spans Ser330–His346.

This sequence belongs to the G-protein coupled receptor 1 family. Opsin subfamily. In terms of processing, phosphorylated on some or all of the serine and threonine residues present in the C-terminal region. Expressed in the inner and outer segments of cone photoreceptor cells in the retina (at protein level).

It is found in the cell membrane. Its subcellular location is the photoreceptor inner segment. The protein resides in the cell projection. It localises to the cilium. The protein localises to the photoreceptor outer segment. It is found in the cytoplasm. Its subcellular location is the perinuclear region. Functionally, visual pigments are the light-absorbing molecules that mediate vision. They consist of an apoprotein, opsin, covalently linked to cis-retinal. Required for the maintenance of cone outer segment organization in the ventral retina, but not essential for the maintenance of functioning cone photoreceptors. Involved in ensuring correct abundance and localization of retinal membrane proteins. May increase spectral sensitivity in dim light. This chain is Short-wave-sensitive opsin 1 (Opn1sw), found in Mus musculus (Mouse).